A 314-amino-acid chain; its full sequence is Methionyl-tRNA formyltransferase (314 aa).

110 to 113 (SLLP) serves as a coordination point for (6S)-5,6,7,8-tetrahydrofolate.

It belongs to the Fmt family.

The catalysed reaction is L-methionyl-tRNA(fMet) + (6R)-10-formyltetrahydrofolate = N-formyl-L-methionyl-tRNA(fMet) + (6S)-5,6,7,8-tetrahydrofolate + H(+). Its function is as follows. Attaches a formyl group to the free amino group of methionyl-tRNA(fMet). The formyl group appears to play a dual role in the initiator identity of N-formylmethionyl-tRNA by promoting its recognition by IF2 and preventing the misappropriation of this tRNA by the elongation apparatus. This Bacillus cereus (strain B4264) protein is Methionyl-tRNA formyltransferase.